Consider the following 527-residue polypeptide: Probable feruloyl esterase B-2 (527 aa).

The signal sequence occupies residues 1–19 (MAPIHYLLPIITLGSAALA). Intrachain disulfides connect cysteine 28–cysteine 75 and cysteine 63–cysteine 114. N-linked (GlcNAc...) asparagine glycosylation is found at asparagine 53, asparagine 85, asparagine 98, asparagine 138, and asparagine 180. 4 cysteine pairs are disulfide-bonded: cysteine 187–cysteine 441, cysteine 256–cysteine 273, cysteine 282–cysteine 291, and cysteine 503–cysteine 525. Serine 188 acts as the Acyl-ester intermediate in catalysis. 5 residues coordinate Ca(2+): aspartate 257, aspartate 260, alanine 262, aspartate 264, and isoleucine 266. Residues asparagine 311 and asparagine 355 are each glycosylated (N-linked (GlcNAc...) asparagine). Catalysis depends on charge relay system residues aspartate 400 and histidine 440. N-linked (GlcNAc...) asparagine glycosylation occurs at asparagine 516.

It belongs to the tannase family.

Its subcellular location is the secreted. The enzyme catalyses feruloyl-polysaccharide + H2O = ferulate + polysaccharide.. In terms of biological role, involved in degradation of plant cell walls. Hydrolyzes the feruloyl-arabinose ester bond in arabinoxylans as well as the feruloyl-galactose and feruloyl-arabinose ester bonds in pectin. The sequence is that of Probable feruloyl esterase B-2 (faeB-2) from Aspergillus terreus (strain NIH 2624 / FGSC A1156).